The following is a 237-amino-acid chain: Small ribosomal subunit protein uS3 (237 aa).

Positions Ile39–Arg107 constitute a KH type-2 domain. Residues Met213–Ala237 form a disordered region.

The protein belongs to the universal ribosomal protein uS3 family. Part of the 30S ribosomal subunit. Forms a tight complex with proteins S10 and S14.

Its function is as follows. Binds the lower part of the 30S subunit head. Binds mRNA in the 70S ribosome, positioning it for translation. This Rhizobium meliloti (strain 1021) (Ensifer meliloti) protein is Small ribosomal subunit protein uS3.